A 255-amino-acid chain; its full sequence is Small ribosomal subunit protein uS10m (255 aa).

A mitochondrion-targeting transit peptide spans 1-32 (MALPAARSALSARAFIRPAAALNAAASSSRYL). 2 disordered regions span residues 30–52 (RYLSTTTPRHDAPVATTPGNSET) and 220–255 (SEGEGEDQAEGVQKIVDAAREEKPAEKLKEEEAKSS). Positions 236–255 (DAAREEKPAEKLKEEEAKSS) are enriched in basic and acidic residues.

It belongs to the universal ribosomal protein uS10 family. As to quaternary structure, part of the mitochondrial small ribosomal subunit.

The protein localises to the mitochondrion. Functionally, involved in mitochondrial genome encoded proteins translation. Involved in the binding of tRNA to the ribosomes. This chain is Small ribosomal subunit protein uS10m (RSM10), found in Cryptococcus neoformans var. neoformans serotype D (strain B-3501A) (Filobasidiella neoformans).